Here is a 774-residue protein sequence, read N- to C-terminus: Alpha,alpha-trehalose phosphorylase (774 aa).

369–370 (WD) is a substrate binding site. The active-site Proton donor is E498. Residue 610-611 (KQ) participates in substrate binding.

Belongs to the glycosyl hydrolase 65 family. In terms of assembly, homodimer.

It catalyses the reaction alpha,alpha-trehalose + phosphate = beta-D-glucose 1-phosphate + D-glucose. It functions in the pathway glycan degradation; trehalose degradation. Its activity is regulated as follows. Inhibited by Cu(2+), Hg(2+), Mg(2+), Mn(2+), Pb(2+) and Zn(2+). In terms of biological role, catalyzes the reversible phosphorolytic cleavage of trehalose. Phosphorolysis is specific for trehalose, but D-xylose, D-galactose, L-arabinose, D-fucose, L-fucose, D-glucosamine and 2-deoxy D-glucose can act as substitutes for D-glucose in the synthetic reaction. This chain is Alpha,alpha-trehalose phosphorylase (treP), found in Thermoanaerobacter brockii (Thermoanaerobium brockii).